A 919-amino-acid chain; its full sequence is MDYKDTLLLPTTKFEMRGNLINNEPIRYASWDEKKIYEKMKKNRKNAQSFTLHDGPPYANGHTHIGHALNKILKDIIVKHNYFSGKSVRFTPGWDCHGLPIEQQVEKKLGGKQKKELLEKAKIRELCRAHAAEFVDIQREEFKKLGVIADWENPYVTMDFKFEANIYRTLCNVAKKGLLIERSKPVFWSWAERTALAEAEVEYEDKEDYSIFIAFELSDEAKAKLSINSKAALVIWTTTPWTIPANTGISLNPEEEYILTTTGYIVAKKLLSSLNESKILSGDIAQTFKAKEFENLLALNPLNGRTSRIVLGEHVLVENGTGCVHTAPGHGEDDYRIGLVYDLEVVMPVDETGCYDETIVRDGLIPNAEDFLGRHIFKSNEDLITLMGESVVHVSKFKHSYPHCWRSHTPLIFRATKQWFISVDEKPSGSDKTLRDIALSEVEKTLFFPETGRNRLKSMVANRPDWCISRQRDWGVPIAFFRVKATGEVLLDEKVLNFTAMVFEMHGSDAWYSMPTEQLLYPGAGYSADELEKVTDILDVWFDSGSTWYSVLKSRNYDAGEFQADLYVEGSDQHRGWFQSSMFLSAAVEHKAPYKGVLTHGFTVDEKGEKMSKSKGNVVAPETVLKEYGSEILRLWVASSDYQGDLKISQSILKQSAENYRKLRNTFRIMLANINDLHALTPYEKMGELDKWILNEAKSVFDGVHKSFSNYNFVNGMSLLNNFIVNELSGIYIDITKDSLYCDAKDDARRTSSQSAMALIVKSLLTLIAPILTYTADEIVEYLPEVIRESKEDIFDFVHKNIDVAESGFNTDYMYAAREKFYEIVDGLKKEKIIKNTLELVIVTESKKIAEMDKTAAEDWFVVSGISHSEVIAELGKFEVDGSIFVIQKATAAKCPRCWKYQAKDETATCTRCSKVLNA.

A 'HIGH' region motif is present at residues 57-67 (PYANGHTHIGH). Glutamate 569 is an L-isoleucyl-5'-AMP binding site. The 'KMSKS' region motif lies at 610–614 (KMSKS). Lysine 613 contacts ATP. 4 residues coordinate Zn(2+): cysteine 895, cysteine 898, cysteine 910, and cysteine 913.

It belongs to the class-I aminoacyl-tRNA synthetase family. IleS type 1 subfamily. As to quaternary structure, monomer. It depends on Zn(2+) as a cofactor.

Its subcellular location is the cytoplasm. The enzyme catalyses tRNA(Ile) + L-isoleucine + ATP = L-isoleucyl-tRNA(Ile) + AMP + diphosphate. Its function is as follows. Catalyzes the attachment of isoleucine to tRNA(Ile). As IleRS can inadvertently accommodate and process structurally similar amino acids such as valine, to avoid such errors it has two additional distinct tRNA(Ile)-dependent editing activities. One activity is designated as 'pretransfer' editing and involves the hydrolysis of activated Val-AMP. The other activity is designated 'posttransfer' editing and involves deacylation of mischarged Val-tRNA(Ile). This Sulfurimonas denitrificans (strain ATCC 33889 / DSM 1251) (Thiomicrospira denitrificans (strain ATCC 33889 / DSM 1251)) protein is Isoleucine--tRNA ligase.